A 547-amino-acid chain; its full sequence is Cdc42-interacting protein 4 (547 aa).

The segment at Met-1–Phe-117 is required for translocation to the plasma membrane in response to insulin, podosome formation and interaction with AKAP9 and microtubules. In terms of domain architecture, F-BAR spans Met-1–Asp-264. The stretch at Phe-67–Val-259 forms a coiled coil. The interval Arg-293–Glu-483 is interaction with CDC42. The interaction with PDE6G stretch occupies residues Arg-293–Asn-547. The interval Val-294–Phe-323 is disordered. Ser-296, Ser-298, and Ser-299 each carry phosphoserine. Residues Thr-332–Asp-425 adopt a coiled-coil conformation. One can recognise an REM-1 domain in the interval His-337–Glu-414. The required for interaction with FASLG and localization to lysosomes stretch occupies residues Ala-415–Asn-547. A disordered region spans residues Leu-420–Ala-485. The residue at position 426 (Ser-426) is a Phosphoserine. Residues Thr-431–Pro-487 form an interaction with DNM2 and WASL region. Low complexity predominate over residues Pro-441 to Ser-451. Residues Glu-476–Asn-547 are interaction with DNM1 and WASL. The interval Pro-484 to Asn-547 is required for podosome formation. In terms of domain architecture, SH3 spans Ser-486 to Asn-547. The segment at Gln-490–Asn-547 is interaction with WAS. The tract at residues Val-492–Asn-547 is interaction with ARHGAP17, DAAM1, DIAPH1 and DIAPH2.

It belongs to the FNBP1 family. In terms of assembly, homodimerizes, the dimers can polymerize end-to-end to form filamentous structures. Interacts specifically with GTP-bound CDC42 and RHOQ. Interacts with AKAP9, ARHGAP17, DAAM1, DIAPH1, DIAPH2, DNM1, DNM2, FASLG/FASL, GAPVD1, LYN, microtubules, SRC, WAS/WASP and WASL/N-WASP. Interacts with the ligand binding domain of the thyroid receptor (TR) in the presence of thyroid hormone. May interact with CTNNB1 and HD/HTT. Interacts with PDE6G. In terms of tissue distribution, expressed in adrenal gland, aorta, brain, heart, kidney, liver, skeletal muscle and spleen.

It localises to the cytoplasm. Its subcellular location is the cytoskeleton. The protein localises to the cell cortex. The protein resides in the lysosome. It is found in the golgi apparatus. It localises to the cell membrane. Its subcellular location is the cell projection. The protein localises to the phagocytic cup. Its function is as follows. Required to coordinate membrane tubulation with reorganization of the actin cytoskeleton during endocytosis. Also acts as a link between CDC42 signaling and regulation of the actin cytoskeleton. Binds to lipids such as phosphatidylinositol 4,5-bisphosphate and phosphatidylserine and promotes membrane invagination and the formation of tubules. Also enhances actin polymerization in the vicinity of membrane tubules by recruiting WASL/N-WASP which in turn activates the Arp2/3 complex. Actin polymerization and dynamin may promote the fission of membrane tubules to form endocytic vesicles. Required for the formation of podosomes, actin-rich adhesion structures specific to monocyte-derived cells. Required for translocation of GLUT4 to the plasma membrane in response to insulin signaling. May be required for the lysosomal retention of FASLG/FASL. The polypeptide is Cdc42-interacting protein 4 (Trip10) (Rattus norvegicus (Rat)).